Here is a 333-residue protein sequence, read N- to C-terminus: MAHPLVFITGATGFLGSATAVAALKAGYRLRICVRKPSDELQNLLSGYSEQVEFVTVADWTAEGAFRGLLDGADYVIHLAHPIPSGPEKEYYFTPAVKATTALLREAARVPSIKKVVVTSSIAALMPLDGIPSGGVIKEDNDWDFDVDETEDFAASNDPRGIPMRLYHASKLLANQTAWEFRKTAKPPYALVTLHPAFVYGRNPVQTTAEAIQESSNGLLWHAIMTGVPHHSYSRVPGVHIDDVVEAHLRALDPAIPDGSKYLLAAKGGTWKEVADVIQRDYSYLGAKITPDIEEEFLSTDSSKAEAELGMRWRAWEQMVRDVVDQQLEFANV.

Residue Tyr-167 coordinates NADP(+).

It belongs to the NAD(P)-dependent epimerase/dehydratase family. Dihydroflavonol-4-reductase subfamily.

Its function is as follows. Ketoreductase; part of the gene cluster that mediates the biosynthesis of sphingofungins, bioactive molecules acting as sphingolipid inhibitors via inhibiting serine palmitoyl transferase (SPT). Does not seem to be involved in any biosynthetic process leading to the production of sphingofungins, but might be connected to a regulation or resistance mechanism. The sequence is that of Ketoreductase sphI from Aspergillus fumigatus (strain CBS 144.89 / FGSC A1163 / CEA10) (Neosartorya fumigata).